Reading from the N-terminus, the 347-residue chain is S-adenosylmethionine:tRNA ribosyltransferase-isomerase (347 aa).

This sequence belongs to the QueA family. In terms of assembly, monomer.

It is found in the cytoplasm. The enzyme catalyses 7-aminomethyl-7-carbaguanosine(34) in tRNA + S-adenosyl-L-methionine = epoxyqueuosine(34) in tRNA + adenine + L-methionine + 2 H(+). The protein operates within tRNA modification; tRNA-queuosine biosynthesis. Transfers and isomerizes the ribose moiety from AdoMet to the 7-aminomethyl group of 7-deazaguanine (preQ1-tRNA) to give epoxyqueuosine (oQ-tRNA). This is S-adenosylmethionine:tRNA ribosyltransferase-isomerase from Streptococcus thermophilus (strain CNRZ 1066).